Reading from the N-terminus, the 220-residue chain is MPGPDSFDARSRISRFRPHSAADLVRRNTRVTVTQVPQVGHTGGLAQRYARALYDLASEQGNLSDVLGEVKALRAAIAESDDLRKFLADARMDIRQGRTVSNVLMSKLGFGDVLRRFVGVIADNRRLPDLASILDGVLALDSALRGEVVAEVRSAQPLTDTQRSQLQARLAEAGYSRVSMTERTDAALLGGMTVRIGSTLFDTSIAGRLTRLQNAMKGAA.

The protein belongs to the ATPase delta chain family. As to quaternary structure, F-type ATPases have 2 components, F(1) - the catalytic core - and F(0) - the membrane proton channel. F(1) has five subunits: alpha(3), beta(3), gamma(1), delta(1), epsilon(1). F(0) has three main subunits: a(1), b(2) and c(10-14). The alpha and beta chains form an alternating ring which encloses part of the gamma chain. F(1) is attached to F(0) by a central stalk formed by the gamma and epsilon chains, while a peripheral stalk is formed by the delta and b chains.

It localises to the cell inner membrane. Functionally, f(1)F(0) ATP synthase produces ATP from ADP in the presence of a proton or sodium gradient. F-type ATPases consist of two structural domains, F(1) containing the extramembraneous catalytic core and F(0) containing the membrane proton channel, linked together by a central stalk and a peripheral stalk. During catalysis, ATP synthesis in the catalytic domain of F(1) is coupled via a rotary mechanism of the central stalk subunits to proton translocation. In terms of biological role, this protein is part of the stalk that links CF(0) to CF(1). It either transmits conformational changes from CF(0) to CF(1) or is implicated in proton conduction. The chain is ATP synthase subunit delta from Gluconobacter oxydans (strain 621H) (Gluconobacter suboxydans).